Consider the following 349-residue polypeptide: Cobalt-precorrin-5B C(1)-methyltransferase (349 aa).

This sequence belongs to the CbiD family.

It catalyses the reaction Co-precorrin-5B + S-adenosyl-L-methionine = Co-precorrin-6A + S-adenosyl-L-homocysteine. Its pathway is cofactor biosynthesis; adenosylcobalamin biosynthesis; cob(II)yrinate a,c-diamide from sirohydrochlorin (anaerobic route): step 6/10. Functionally, catalyzes the methylation of C-1 in cobalt-precorrin-5B to form cobalt-precorrin-6A. This chain is Cobalt-precorrin-5B C(1)-methyltransferase, found in Saccharolobus solfataricus (strain ATCC 35092 / DSM 1617 / JCM 11322 / P2) (Sulfolobus solfataricus).